We begin with the raw amino-acid sequence, 113 residues long: Neocarzinostatin (113 aa).

Disulfide bonds link Cys37-Cys47 and Cys88-Cys93.

It belongs to the neocarzinostatin family.

Its function is as follows. NCS has antibiotic activity (for Gram-positive bacteria) and antitumor activity (for certain mouse tumors). NCS binds non-covalently to a chromophore which is the cytotoxic and mutagenic component of the antibiotic. The chromophore binds to DNA as a weak intercalator and causes single- and double-strand breaks. The protein is Neocarzinostatin (ncsA) of Streptomyces malayensis.